A 175-amino-acid polypeptide reads, in one-letter code: Shikimate kinase (175 aa).

14 to 19 (GAGKST) contributes to the ATP binding site. S18 is a Mg(2+) binding site. Substrate-binding residues include D36, R60, and G82. R120 provides a ligand contact to ATP. R140 contributes to the substrate binding site. Q157 is an ATP binding site.

It belongs to the shikimate kinase family. As to quaternary structure, monomer. The cofactor is Mg(2+).

The protein resides in the cytoplasm. The catalysed reaction is shikimate + ATP = 3-phosphoshikimate + ADP + H(+). It participates in metabolic intermediate biosynthesis; chorismate biosynthesis; chorismate from D-erythrose 4-phosphate and phosphoenolpyruvate: step 5/7. Functionally, catalyzes the specific phosphorylation of the 3-hydroxyl group of shikimic acid using ATP as a cosubstrate. The protein is Shikimate kinase of Actinobacillus succinogenes (strain ATCC 55618 / DSM 22257 / CCUG 43843 / 130Z).